The primary structure comprises 84 residues: Large ribosomal subunit protein bL27 (84 aa).

A disordered region spans residues 1 to 23 (MAHKKGASSSRNGRESAAQRLGV).

It belongs to the bacterial ribosomal protein bL27 family.

The polypeptide is Large ribosomal subunit protein bL27 (Salinispora arenicola (strain CNS-205)).